Here is an 87-residue protein sequence, read N- to C-terminus: Antitoxin epsilon (87 aa).

This sequence belongs to the epsilon antitoxin family. As to quaternary structure, in the presence of the zeta toxin, forms an inactive PezA(2)PezT(2) heterotetramer.

Its function is as follows. Antitoxin component of a type II toxin-antitoxin (TA) system. Neutralizes the toxic effect of cognate zeta toxin. Part of a postsegregational killing (PSK) system involved in the killing of plasmid-free cells. Continuous synthesis of the epsilon antitoxin is required to counteract the zeta toxin. The chain is Antitoxin epsilon from Lactococcus lactis subsp. lactis (Streptococcus lactis).